The chain runs to 294 residues: Shikimate dehydrogenase (NADP(+)) (294 aa).

Shikimate-binding positions include 23-25 (SRS) and Thr-76. Lys-80 (proton acceptor) is an active-site residue. Residues Asn-101 and Asp-116 each contribute to the shikimate site. Residues 141 to 145 (GAGGA) and Met-233 contribute to the NADP(+) site. Tyr-235 is a binding site for shikimate. Residue Gly-256 coordinates NADP(+).

It belongs to the shikimate dehydrogenase family. In terms of assembly, homodimer.

The enzyme catalyses shikimate + NADP(+) = 3-dehydroshikimate + NADPH + H(+). Its pathway is metabolic intermediate biosynthesis; chorismate biosynthesis; chorismate from D-erythrose 4-phosphate and phosphoenolpyruvate: step 4/7. Functionally, involved in the biosynthesis of the chorismate, which leads to the biosynthesis of aromatic amino acids. Catalyzes the reversible NADPH linked reduction of 3-dehydroshikimate (DHSA) to yield shikimate (SA). In Methylibium petroleiphilum (strain ATCC BAA-1232 / LMG 22953 / PM1), this protein is Shikimate dehydrogenase (NADP(+)).